We begin with the raw amino-acid sequence, 214 residues long: Adenylate kinase (214 aa).

10 to 15 serves as a coordination point for ATP; it reads GAGKGT. The NMP stretch occupies residues 30-59; it reads STGDMLRAAVKAGSELGLKAKEIMDAGKLV. AMP contacts are provided by residues T31, R36, 57–59, 85–88, and Q92; these read KLV and GFPR. The LID stretch occupies residues 122-159; that stretch reads GRRVHAPSGRVYHVTFNPPRVEGKDDMTGEELTTRKDD. Residues R123 and 132–133 contribute to the ATP site; that span reads VY. Residues R156 and R167 each coordinate AMP. Position 200 (R200) interacts with ATP.

This sequence belongs to the adenylate kinase family. As to quaternary structure, monomer.

The protein resides in the cytoplasm. The catalysed reaction is AMP + ATP = 2 ADP. It participates in purine metabolism; AMP biosynthesis via salvage pathway; AMP from ADP: step 1/1. Its function is as follows. Catalyzes the reversible transfer of the terminal phosphate group between ATP and AMP. Plays an important role in cellular energy homeostasis and in adenine nucleotide metabolism. The polypeptide is Adenylate kinase (Erwinia tasmaniensis (strain DSM 17950 / CFBP 7177 / CIP 109463 / NCPPB 4357 / Et1/99)).